The sequence spans 460 residues: Putative arginine/ornithine antiporter (460 aa).

Residues 1–4 lie on the Cytoplasmic side of the membrane; sequence MEKK. Residues 5–25 traverse the membrane as a helical segment; sequence LGLSALTALVLSSMLGAGVFS. At 26-38 the chain is on the periplasmic side; that stretch reads LPQNMAAVASPAA. The chain crosses the membrane as a helical span at residues 39-59; the sequence is LLIGWGITGAGILLLAFAMLI. Residues 60–92 are Cytoplasmic-facing; it reads LTRIRPELDGGIFTYAREGFGELIGFCSAWGYW. The helical transmembrane segment at 93 to 113 threads the bilayer; sequence LCAVIANVSYLVIVFSALSFF. Residues 114–125 are Periplasmic-facing; that stretch reads TDTPELRLFGDG. Residues 126-146 traverse the membrane as a helical segment; sequence NTWQSIVGASALLWIVHFLIL. Topologically, residues 147–157 are cytoplasmic; the sequence is RGVQTAASINL. A helical transmembrane segment spans residues 158-178; sequence VATLAKLLPLGLFVVLAMMMF. Residues 179–201 are Periplasmic-facing; it reads KLDTFKLDFTGLALGVPVWEQVK. Residues 202–222 traverse the membrane as a helical segment; sequence NTMLITLWVFIGVEGAVVVSA. At 223-235 the chain is on the cytoplasmic side; sequence RARNKRDVGKATL. The chain crosses the membrane as a helical span at residues 236 to 256; that stretch reads LAVLSALGVYLLVTLLSLGVV. Residues 257-282 lie on the Periplasmic side of the membrane; the sequence is ARPELAEIRNPSMAGLMVEMMGPWGE. The helical transmembrane segment at 283-303 threads the bilayer; that stretch reads IIIAAGLIVSVCGAYLSWTIM. Over 304 to 331 the chain is Cytoplasmic; it reads AAEVPFLAATHKAFPRIFARQNAQAAPS. The helical transmembrane segment at 332–352 threads the bilayer; sequence ASLWLTNICVQICLVLIWLTG. The Periplasmic segment spans residues 353–357; it reads SDYNT. A helical transmembrane segment spans residues 358-378; it reads LLTIASEMILVPYFLVGAFLL. Topologically, residues 379-384 are cytoplasmic; it reads KIATRP. A run of 2 helical transmembrane segments spans residues 385–405 and 406–426; these read LHKA…YASG and PMHL…FLYA. Residues 427 to 439 lie on the Cytoplasmic side of the membrane; sequence RKTHTHDNVLNRQ. Residues 440-460 form a helical membrane-spanning segment; it reads EMVLIGMLLIASVPATWMLVG.

Belongs to the amino acid-polyamine-organocation (APC) superfamily. Basic amino acid/polyamine antiporter (APA) (TC 2.A.3.2) family.

The protein localises to the cell inner membrane. It carries out the reaction L-ornithine(in) + L-arginine(out) = L-ornithine(out) + L-arginine(in). In terms of biological role, catalyzes electroneutral exchange between arginine and ornithine to allow high-efficiency energy conversion in the arginine deiminase pathway. This chain is Putative arginine/ornithine antiporter (ydgI), found in Escherichia coli O6:H1 (strain CFT073 / ATCC 700928 / UPEC).